Here is a 430-residue protein sequence, read N- to C-terminus: Trigger factor (430 aa).

Residues 163-248 (GDIAVIDFEG…LNSLKRKNMP (86 aa)) enclose the PPIase FKBP-type domain.

Belongs to the FKBP-type PPIase family. Tig subfamily.

It localises to the cytoplasm. It catalyses the reaction [protein]-peptidylproline (omega=180) = [protein]-peptidylproline (omega=0). Its function is as follows. Involved in protein export. Acts as a chaperone by maintaining the newly synthesized protein in an open conformation. Functions as a peptidyl-prolyl cis-trans isomerase. This chain is Trigger factor, found in Brevibacillus brevis (strain 47 / JCM 6285 / NBRC 100599).